Reading from the N-terminus, the 326-residue chain is Vitamin B12 import system permease protein BtuC (326 aa).

9 helical membrane-spanning segments follow: residues 15-35 (WLLC…CAGE), 61-81 (LAVL…QALF), 88-108 (PGLL…VLLG), 112-132 (LPNW…TLIL), 146-166 (LLAG…AIYF), 184-204 (GGVD…LLWI), 240-260 (GWMV…GLVI), 274-294 (VLLP…DIVA), and 302-322 (ELPI…WLLL).

This sequence belongs to the binding-protein-dependent transport system permease family. FecCD subfamily. The complex is composed of two ATP-binding proteins (BtuD), two transmembrane proteins (BtuC) and a solute-binding protein (BtuF).

It localises to the cell inner membrane. Part of the ABC transporter complex BtuCDF involved in vitamin B12 import. Involved in the translocation of the substrate across the membrane. This Shigella boydii serotype 18 (strain CDC 3083-94 / BS512) protein is Vitamin B12 import system permease protein BtuC.